Reading from the N-terminus, the 668-residue chain is DNA ligase (668 aa).

Residues 35–39 (DKEYD) and 83–84 (SL) each bind NAD(+). Lysine 125 (N6-AMP-lysine intermediate) is an active-site residue. NAD(+) is bound by residues arginine 147, glutamate 181, and lysine 317. Cysteine 410, cysteine 413, cysteine 426, and cysteine 432 together coordinate Zn(2+). The BRCT domain occupies 591 to 668 (KKDNKFNGKT…TEEEFNEMIN (78 aa)).

The protein belongs to the NAD-dependent DNA ligase family. LigA subfamily. Mg(2+) serves as cofactor. The cofactor is Mn(2+).

The catalysed reaction is NAD(+) + (deoxyribonucleotide)n-3'-hydroxyl + 5'-phospho-(deoxyribonucleotide)m = (deoxyribonucleotide)n+m + AMP + beta-nicotinamide D-nucleotide.. Its function is as follows. DNA ligase that catalyzes the formation of phosphodiester linkages between 5'-phosphoryl and 3'-hydroxyl groups in double-stranded DNA using NAD as a coenzyme and as the energy source for the reaction. It is essential for DNA replication and repair of damaged DNA. This chain is DNA ligase, found in Clostridium tetani (strain Massachusetts / E88).